We begin with the raw amino-acid sequence, 591 residues long: A-type ATP synthase subunit A (591 aa).

Position 233 to 240 (233 to 240) interacts with ATP; it reads GPFGSGKT.

This sequence belongs to the ATPase alpha/beta chains family. In terms of assembly, has multiple subunits with at least A(3), B(3), C, D, E, F, H, I and proteolipid K(x).

The protein resides in the cell membrane. It catalyses the reaction ATP + H2O + 4 H(+)(in) = ADP + phosphate + 5 H(+)(out). In terms of biological role, component of the A-type ATP synthase that produces ATP from ADP in the presence of a proton gradient across the membrane. The A chain is the catalytic subunit. The chain is A-type ATP synthase subunit A from Metallosphaera sedula (strain ATCC 51363 / DSM 5348 / JCM 9185 / NBRC 15509 / TH2).